Here is a 187-residue protein sequence, read N- to C-terminus: LSM complex subunit LSM4 (187 aa).

Residues 2–85 enclose the Sm domain; sequence LPLYLLTNAK…IKFIKLQDNI (84 aa). Residues 93–187 form a disordered region; that stretch reads INSNNNSNSN…NSSSPQKVEF (95 aa). Over residues 112-167 the composition is skewed to low complexity; the sequence is NRDSNNNRGNYNRRNNNNGNSNRRPYSQNRQYNNSNSSNINNSINSINSNNQNMNN. Arg119 is modified (omega-N-methylarginine). Residues 175 to 187 show a composition bias toward polar residues; the sequence is HHFNSSSPQKVEF. A Phosphoserine modification is found at Ser181.

This sequence belongs to the snRNP Sm proteins family. As to quaternary structure, component of the heptameric LSM1-LSM7 complex that forms a seven-membered ring structure with a donut shape. The LSm subunits are arranged in the order LSM1, LSM2, LSM3, LSM6, LSM5, LSM7 and LSM4. Except for LSM1, where a C-terminal helix crosses the ring structure to form additional interactions with LSM3 and LSM6, each subunit interacts only with its two neighboring subunits. The LSM1-LSM7 complex interacts with PAT1; within the complex PAT1 has direct interactions with LSM2 and LSM3. The LSM1-LSM7 complex interacts with XRN1. Component of the heptameric LSM2-LSM8 complex that forms a seven-membered ring structure with a donut shape; an RNA strand can pass through the hole in the center of the ring structure. The LSm subunits are arranged in the order LSM8, LSM2, LSM3, LSM6, LSM5, LSM7 and LSM4. Component of the spliceosome U4/U6-U5 tri-snRNP complex composed of the U4, U6 and U5 snRNAs and at least PRP3, PRP4, PRP6, PRP8, PRP18, PRP31, PRP38, SNU13, SNU23, SNU66, SNU114, SPP381, SMB1, SMD1, SMD2, SMD3, SMX2, SMX3, LSM2, LSM3, LSM4, LSM5, LSM6, LSM7, LSM8, BRR2 and DIB1. May be found in a complex comprising LSM2-LSM7 without LSM1 or LSM8; the complex associates with pre-P RNA and snoRNA SNR5.

It is found in the nucleus. Its subcellular location is the cytoplasm. Its function is as follows. Component of LSm protein complexes, which are involved in RNA processing and may function in a chaperone-like manner. Component of the cytoplasmic LSM1-LSM7 complex which is involved in mRNA degradation by activating the decapping step. Together with PAT1, the LSM1-LSM7 complex binds to osmotic stress-activated mRNAs to attenuate the osmotic stress response, probably by limiting ribosome access to the mRNA and consequently translation. Component of the nuclear LSM2-LSM8 complex, which is involved in spliceosome assembly. The LSM2-LSM8 complex plays a role in the biogenesis of the spliceosomal U4/U6-U5 tri-snRNP complex by accelerating PRP24-mediated annealing of U4/U6 di-snRNA. The LSM2-LSM8 complex binds U6 snRNA terminating with a non-cyclic 3' phosphate group. LSM2-LSM8 is probably also involved in degradation of nuclear pre-mRNA by targeting them for decapping. LSM2-LSM8 could be involved in processing of pre-tRNAs, pre-rRNAs and U3 snoRNA, although involvement may be indirect. In a complex that probably contains LSM2-LSM7, but not LSM1 or LSM8, associates with the precursor of the RNA component of RNase P (pre-P RNA) and may be involved in maturing pre-P RNA; the complex also associates with snoRNA SNR5. The chain is LSM complex subunit LSM4 from Saccharomyces cerevisiae (strain ATCC 204508 / S288c) (Baker's yeast).